A 470-amino-acid chain; its full sequence is Aminodeoxychorismate synthase component 1 (470 aa).

It belongs to the anthranilate synthase component I family. Monomer. Heterodimer consisting of two non-identical subunits: a glutamine amidotransferase subunit (PabA) and a aminodeoxychorismate synthase subunit (PabB). Mg(2+) is required as a cofactor.

It catalyses the reaction chorismate + L-glutamine = 4-amino-4-deoxychorismate + L-glutamate. It functions in the pathway cofactor biosynthesis; tetrahydrofolate biosynthesis; 4-aminobenzoate from chorismate: step 1/2. Functionally, part of a heterodimeric complex that catalyzes the two-step biosynthesis of 4-amino-4-deoxychorismate (ADC), a precursor of p-aminobenzoate (PABA) and tetrahydrofolate. In the first step, a glutamine amidotransferase (PabA) generates ammonia as a substrate that, along with chorismate, is used in the second step, catalyzed by aminodeoxychorismate synthase (PabB) to produce ADC. The sequence is that of Aminodeoxychorismate synthase component 1 (pabB) from Bacillus subtilis (strain 168).